Reading from the N-terminus, the 751-residue chain is Catalase-peroxidase 1 (751 aa).

The span at 1 to 11 (MTDKQHTRSVS) shows a compositional bias: basic and acidic residues. Residues 1–31 (MTDKQHTRSVSESENPAIPSPTPKVSRPRRN) form a disordered region. Positions 103–225 (WHAAGTYRIA…LANVQMGLIY (123 aa)) form a cross-link, tryptophyl-tyrosyl-methioninium (Trp-Tyr) (with M-251). The active-site Proton acceptor is the H104. Residues 225-251 (YVNPEGPGGNPDPLAAARDIRETFARM) constitute a cross-link (tryptophyl-tyrosyl-methioninium (Tyr-Met) (with W-103)). H266 is a binding site for heme b. A disordered region spans residues 345 to 375 (AGAKQWKPKNPEANDTVPDAHGASRRHSPTM).

This sequence belongs to the peroxidase family. Peroxidase/catalase subfamily. Homodimer or homotetramer. Heme b is required as a cofactor. In terms of processing, formation of the three residue Trp-Tyr-Met cross-link is important for the catalase, but not the peroxidase activity of the enzyme.

The enzyme catalyses H2O2 + AH2 = A + 2 H2O. It catalyses the reaction 2 H2O2 = O2 + 2 H2O. In terms of biological role, bifunctional enzyme with both catalase and broad-spectrum peroxidase activity. In Cupriavidus pinatubonensis (strain JMP 134 / LMG 1197) (Cupriavidus necator (strain JMP 134)), this protein is Catalase-peroxidase 1.